The chain runs to 103 residues: GP16 protein (103 aa).

This is GP16 protein (GP16) from Orgyia pseudotsugata multicapsid polyhedrosis virus (OpMNPV).